The following is a 146-amino-acid chain: Protein STIG1 (146 aa).

Residues 1–23 (MAFINLLILIILTLSSTPITTMS) form the signal peptide. N-linked (GlcNAc...) asparagine glycosylation is found at asparagine 31, asparagine 61, and asparagine 84.

The protein belongs to the STIG1 family. In terms of processing, glycosylated. In terms of tissue distribution, expressed exclusively in the stigmatic secretory zone.

The protein resides in the secreted. In terms of biological role, involved in the temporal regulation of the exudate secretion onto the stigma. The sequence is that of Protein STIG1 from Nicotiana tabacum (Common tobacco).